The primary structure comprises 447 residues: Acyl-lipid (7-3)-desaturase (447 aa).

Positions 36-94 constitute a Cytochrome b5 heme-binding domain; it reads LTIVGDSVYDAKAFRSEHPGGAHFVSLFGGRDATEAFMEYHRRAWPKSRMSRFHVGSLA. Heme contacts are provided by H53 and H76. 3 consecutive transmembrane segments (helical) span residues 123–143, 154–174, and 185–205; these read GFAPASYWVKAGLILGSAIAL, LLPSIVLGWLFALIGLNIQHD, and SVNLALGLCQDWIGGSMILWL. Residues 173-177 carry the Histidine box-1 motif; it reads HDANH. A Histidine box-2 motif is present at residues 208 to 213; that stretch reads HVVMHH. The next 3 membrane-spanning stretches (helical) occupy residues 244 to 264, 286 to 306, and 315 to 335; these read WLQHLYLLPGETMYAFKLLFL, LFMPSLLLKLTFWARFVALPL, and AVCIAATVMTGSFYLAFFFFI. A Histidine box-3 motif is present at residues 386–390; it reads QIEHH.

It belongs to the fatty acid desaturase type 1 family. It depends on Fe(2+) as a cofactor.

Its subcellular location is the membrane. The enzyme catalyses a (7Z,10Z,13Z,16Z,19Z)-docosapentaenoyl-containing glycerolipid + 2 Fe(II)-[cytochrome b5] + O2 + 2 H(+) = a (4Z,7Z,10Z,13Z,16Z,19Z)-docosahexaenoyl-containing glycerolipid + 2 Fe(III)-[cytochrome b5] + 2 H2O. The catalysed reaction is a (7Z,10Z,13Z,16Z)-docosatetraenoyl-containing glycerolipid + 2 Fe(II)-[cytochrome b5] + O2 + 2 H(+) = a (4Z,7Z,10Z,13Z,16Z)-docosapentaenoyl-containing glycerolipid + 2 Fe(III)-[cytochrome b5] + 2 H2O. Functionally, fatty acid desaturase that introduces a cis double bond at the 4-position in 22-carbon polyunsaturated fatty acids that contain a Delta(7) double bond, resulting in the production of delta-4 desaturated fatty acid docosahexanoic acid (DHA). The protein is Acyl-lipid (7-3)-desaturase of Rebecca salina (Marine microalga).